The primary structure comprises 162 residues: Probable metalloprotease y4jG (162 aa).

Residues 9–147 (TVALPRDCVS…YRLDAKANWN (139 aa)) enclose the MPN domain. Residues His-94, His-96, and Asp-107 each contribute to the Zn(2+) site.

It belongs to the peptidase M67B family.

This Sinorhizobium fredii (strain NBRC 101917 / NGR234) protein is Probable metalloprotease y4jG.